Here is a 311-residue protein sequence, read N- to C-terminus: Aspartate carbamoyltransferase catalytic subunit (311 aa).

Carbamoyl phosphate is bound by residues R55 and T56. Residue K85 participates in L-aspartate binding. Carbamoyl phosphate is bound by residues R106, H135, and Q138. Residues R168 and R230 each coordinate L-aspartate. The carbamoyl phosphate site is built by L268 and P269.

Belongs to the aspartate/ornithine carbamoyltransferase superfamily. ATCase family. In terms of assembly, heterododecamer (2C3:3R2) of six catalytic PyrB chains organized as two trimers (C3), and six regulatory PyrI chains organized as three dimers (R2).

The catalysed reaction is carbamoyl phosphate + L-aspartate = N-carbamoyl-L-aspartate + phosphate + H(+). It functions in the pathway pyrimidine metabolism; UMP biosynthesis via de novo pathway; (S)-dihydroorotate from bicarbonate: step 2/3. In terms of biological role, catalyzes the condensation of carbamoyl phosphate and aspartate to form carbamoyl aspartate and inorganic phosphate, the committed step in the de novo pyrimidine nucleotide biosynthesis pathway. The chain is Aspartate carbamoyltransferase catalytic subunit from Klebsiella pneumoniae (strain 342).